The primary structure comprises 344 residues: AA9 family lytic polysaccharide monooxygenase J (344 aa).

The first 20 residues, 1 to 20 (MKSSLLVVLTAGLAVRDAIA), serve as a signal peptide directing secretion. Residues histidine 21 and histidine 99 each contribute to the Cu(2+) site. The cysteines at positions 58 and 194 are disulfide-linked. Residues histidine 180 and glutamine 189 each coordinate O2. Tyrosine 191 provides a ligand contact to Cu(2+). Positions 272 to 301 (PGGKPASGGSDGNAPEVAEPSGGEGSPSAP) are disordered. Low complexity predominate over residues 285 to 301 (APEVAEPSGGEGSPSAP). The CBM1 domain occupies 304-341 (CEVAAYGQCGGDQYSGCTQCASGYTCKAVSPPYYSQCA).

This sequence belongs to the polysaccharide monooxygenase AA9 family. Cu(2+) serves as cofactor.

Its subcellular location is the secreted. It carries out the reaction [(1-&gt;4)-beta-D-glucosyl]n+m + reduced acceptor + O2 = 4-dehydro-beta-D-glucosyl-[(1-&gt;4)-beta-D-glucosyl]n-1 + [(1-&gt;4)-beta-D-glucosyl]m + acceptor + H2O.. In terms of biological role, lytic polysaccharide monooxygenase (LPMO) that depolymerizes crystalline and amorphous polysaccharides via the oxidation of scissile alpha- or beta-(1-4)-glycosidic bonds, yielding C4 oxidation products. Catalysis by LPMOs requires the reduction of the active-site copper from Cu(II) to Cu(I) by a reducing agent and H(2)O(2) or O(2) as a cosubstrate. In Neurospora crassa (strain ATCC 24698 / 74-OR23-1A / CBS 708.71 / DSM 1257 / FGSC 987), this protein is AA9 family lytic polysaccharide monooxygenase J (gh61-10).